The following is a 588-amino-acid chain: Glycoprotein (588 aa).

The signal sequence occupies residues 1-22; that stretch reads MSILVIILILPILFGEVPPVNS. At 23 to 547 the chain is on the virion surface side; sequence GRVVDLNRNV…TTLEEEVKHG (525 aa). The helical transmembrane segment at 548-568 threads the bilayer; that stretch reads VIIVFFTVIGLIIAVPTLKML. Residues 569–588 lie on the Intravirion side of the membrane; that stretch reads LKGRRPYEPVKSPVVWGGPR.

It belongs to the nucleorhabdovirus glycoprotein family. In terms of assembly, homotrimer. Interacts with matrix protein. Glycosylated by host. Glycosylation is crucial for glycoprotein export at the cell surface.

The protein localises to the virion membrane. Attaches the virus to host cellular receptor, inducing endocytosis of the virion. In the endosome, the acidic pH induces conformational changes in the glycoprotein trimer, which trigger fusion between virus and cell membrane. The chain is Glycoprotein (G) from Taro vein chlorosis virus (TAVCV).